A 393-amino-acid chain; its full sequence is Beta-1,3-galactosyltransferase 7 (393 aa).

The helical; Signal-anchor for type II membrane protein transmembrane segment at 9–29 threads the bilayer; the sequence is VISLKWVPFLCISFFALGAIF. Residues 89–112 are disordered; the sequence is SLDKSVSTLSSTRSSQEMVDGSET. Residues 93–103 show a composition bias toward low complexity; that stretch reads SVSTLSSTRSS.

This sequence belongs to the glycosyltransferase 31 family. Mn(2+) is required as a cofactor. As to expression, expressed in leaves, stems, flowers and siliques.

The protein resides in the golgi apparatus membrane. Its pathway is protein modification; protein glycosylation. In terms of biological role, beta-1,3-galactosyltransferase that transfers galactose from UDP-galactose to substrates with a terminal glycosyl residue. The protein is Beta-1,3-galactosyltransferase 7 (B3GALT7) of Arabidopsis thaliana (Mouse-ear cress).